We begin with the raw amino-acid sequence, 347 residues long: Selenide, water dikinase (347 aa).

Cysteine 17 is an active-site residue. ATP is bound by residues lysine 20 and 48–50 (TRD). Mg(2+) is bound at residue aspartate 51. Residues aspartate 68, aspartate 91, and 139-141 (GHS) each bind ATP. Aspartate 91 provides a ligand contact to Mg(2+). Aspartate 227 serves as a coordination point for Mg(2+).

It belongs to the selenophosphate synthase 1 family. Class I subfamily. As to quaternary structure, homodimer. It depends on Mg(2+) as a cofactor.

The enzyme catalyses hydrogenselenide + ATP + H2O = selenophosphate + AMP + phosphate + 2 H(+). Synthesizes selenophosphate from selenide and ATP. In Cronobacter sakazakii (strain ATCC BAA-894) (Enterobacter sakazakii), this protein is Selenide, water dikinase.